A 128-amino-acid polypeptide reads, in one-letter code: Regulator of ribonuclease activity B (128 aa).

Belongs to the RraB family. As to quaternary structure, interacts with the C-terminal region of Rne.

The protein resides in the cytoplasm. Functionally, globally modulates RNA abundance by binding to RNase E (Rne) and regulating its endonucleolytic activity. Can modulate Rne action in a substrate-dependent manner by altering the composition of the degradosome. This chain is Regulator of ribonuclease activity B, found in Idiomarina loihiensis (strain ATCC BAA-735 / DSM 15497 / L2-TR).